A 103-amino-acid chain; its full sequence is Nucleoid-associated protein CFF8240_0066 (103 aa).

Belongs to the YbaB/EbfC family. Homodimer.

It localises to the cytoplasm. Its subcellular location is the nucleoid. Binds to DNA and alters its conformation. May be involved in regulation of gene expression, nucleoid organization and DNA protection. This chain is Nucleoid-associated protein CFF8240_0066, found in Campylobacter fetus subsp. fetus (strain 82-40).